The following is a 518-amino-acid chain: Membrane-bound lytic murein transglycosylase F (518 aa).

An N-terminal signal peptide occupies residues 1 to 21 (MKKLKINYLFIGILALLLAVA). Positions 22 to 269 (LWPSIPWFGK…RIEEKYLGHG (248 aa)) are non-LT domain. Residues 270–518 (DDFDYVDTRT…SRKGSEEKQN (249 aa)) are LT domain. E314 is a catalytic residue.

The protein in the N-terminal section; belongs to the bacterial solute-binding protein 3 family. This sequence in the C-terminal section; belongs to the transglycosylase Slt family.

The protein localises to the cell outer membrane. It carries out the reaction Exolytic cleavage of the (1-&gt;4)-beta-glycosidic linkage between N-acetylmuramic acid (MurNAc) and N-acetylglucosamine (GlcNAc) residues in peptidoglycan, from either the reducing or the non-reducing ends of the peptidoglycan chains, with concomitant formation of a 1,6-anhydrobond in the MurNAc residue.. Functionally, murein-degrading enzyme that degrades murein glycan strands and insoluble, high-molecular weight murein sacculi, with the concomitant formation of a 1,6-anhydromuramoyl product. Lytic transglycosylases (LTs) play an integral role in the metabolism of the peptidoglycan (PG) sacculus. Their lytic action creates space within the PG sacculus to allow for its expansion as well as for the insertion of various structures such as secretion systems and flagella. The polypeptide is Membrane-bound lytic murein transglycosylase F (Escherichia coli O6:H1 (strain CFT073 / ATCC 700928 / UPEC)).